The sequence spans 959 residues: Protovillin (959 aa).

The segment at 1–53 (MEPPLELPTQRKRVIPSKFGILKRNAEIEAEKNRENLQQSSCFSHINEIGKEI) is tail. The tract at residues 54 to 832 (GLEIWKIIDD…PIMLPTSGVT (779 aa)) is core. Gelsolin-like repeat units follow at residues 64–116 (STIQ…SQET), 204–244 (IRVK…LEKG), 309–366 (IKLY…DQRT), 479–529 (RNKF…EDKG), 603–647 (INIH…KEAA), and 713–754 (FKVF…TEKL). Tandem repeats lie at residues 840-849 (TPKPITTPTV) and 851-860 (TPKPITTPTV). A 2 X 10 AA repeats of T-P-K-P-I-T-T-P-T-V region spans residues 840 to 860 (TPKPITTPTVTTPKPITTPTV). In terms of domain architecture, HP spans 895 to 959 (TTITTFYPLS…KQLRVDNGLF (65 aa)).

The protein belongs to the villin/gelsolin family.

The protein localises to the cytoplasm. The protein resides in the cytoskeleton. Functionally, caps actin filaments but displays neither severing nor cross-linking nor nucleating activities. Protovillin seems to be a villin precursor with only archaic capping activity. It lacks essential changes in the sequence to allow bundling of actin filaments and consequently the appearance of microvilli. In Dictyostelium discoideum (Social amoeba), this protein is Protovillin (vilB).